The chain runs to 474 residues: Hepatocyte nuclear factor 4-alpha (474 aa).

Positions 57–132 (SALCAICGDR…AGMKKEAVQN (76 aa)) form a DNA-binding region, nuclear receptor. NR C4-type zinc fingers lie at residues 60 to 80 (CAIC…CDGC) and 96 to 120 (CRFS…LKKC). 2 positions are modified to phosphoserine: Ser-142 and Ser-143. Tyr-144 is subject to Phosphotyrosine. Residues 147–377 (SSLPSINALL…NLLQEMLLGG (231 aa)) form the NR LBD domain. Position 166 is a phosphothreonine (Thr-166). Ser-167 carries the post-translational modification Phosphoserine. Residues Lys-234 and Lys-307 each participate in a glycyl lysine isopeptide (Lys-Gly) (interchain with G-Cter in ubiquitin) cross-link. Ser-313 carries the post-translational modification Phosphoserine; by AMPK. A 9aaTAD motif is present at residues 368–376 (NLLQEMLLG). The interval 413-450 (SNGQMCEWPRPRGQAATPETPQPSPPSGSGSESYKLLP) is disordered. Thr-429 and Thr-432 each carry phosphothreonine. Position 436 is a phosphoserine (Ser-436). Lys-458 carries the N6-acetyllysine modification.

This sequence belongs to the nuclear hormone receptor family. NR2 subfamily. As to quaternary structure, homodimerization is required for HNF4-alpha to bind to its recognition site. Interacts with CLOCK, BMAL1 and PER1. Interacts with PER2. Interacts with CRY1 and CRY2. Interacts with NR0B2/SHP; the resulting heterodimer is transcriptionally inactive. Interacts with DDX3X; this interaction disrupts the interaction between HNF4 and NR0B2 that forms inactive heterodimers and enhances the formation of active HNF4 homodimers. In terms of processing, phosphorylated on tyrosine residue(s); phosphorylation is important for its DNA-binding activity. Phosphorylation may directly or indirectly play a regulatory role in the subnuclear distribution. Phosphorylation at Ser-313 by AMPK reduces the ability to form homodimers and bind DNA. Post-translationally, acetylation at Lys-458 lowers transcriptional activation by about two-fold. As to expression, expressed in the liver, pancreas and colon in a circadian manner.

It localises to the nucleus. Functionally, transcriptional regulator which controls the expression of hepatic genes during the transition of endodermal cells to hepatic progenitor cells, facilitatating the recruitment of RNA pol II to the promoters of target genes. Activates the transcription of CYP2C38. Represses the CLOCK-BMAL1 transcriptional activity and is essential for circadian rhythm maintenance and period regulation in the liver and colon cells. This Mus musculus (Mouse) protein is Hepatocyte nuclear factor 4-alpha (Hnf4a).